The sequence spans 157 residues: Alanyl-tRNA editing protein AlaX-S (157 aa).

Zn(2+) contacts are provided by His9, His13, Cys116, and His120.

The protein belongs to the class-II aminoacyl-tRNA synthetase family. Editing domain AlaX-S subfamily. As to quaternary structure, monomer and homodimer; the dimer is less active in tRNA editing and does not have a zinc ion associated with it. Another report shows only a monomeric form. The cofactor is Zn(2+).

Its subcellular location is the cytoplasm. Its function is as follows. Functions in trans to edit the amino acid moiety from mischarged charged Ser-tRNA(Ala). Has little activity against Gly-tRNA(Ala). The protein is Alanyl-tRNA editing protein AlaX-S (alaXS) of Pyrococcus horikoshii (strain ATCC 700860 / DSM 12428 / JCM 9974 / NBRC 100139 / OT-3).